Reading from the N-terminus, the 227-residue chain is NAD(P)H-quinone oxidoreductase subunit K, chloroplastic (227 aa).

[4Fe-4S] cluster contacts are provided by Cys-43, Cys-44, Cys-108, and Cys-139.

This sequence belongs to the complex I 20 kDa subunit family. In terms of assembly, NDH is composed of at least 16 different subunits, 5 of which are encoded in the nucleus. [4Fe-4S] cluster serves as cofactor.

It localises to the plastid. Its subcellular location is the chloroplast thylakoid membrane. It carries out the reaction a plastoquinone + NADH + (n+1) H(+)(in) = a plastoquinol + NAD(+) + n H(+)(out). It catalyses the reaction a plastoquinone + NADPH + (n+1) H(+)(in) = a plastoquinol + NADP(+) + n H(+)(out). In terms of biological role, NDH shuttles electrons from NAD(P)H:plastoquinone, via FMN and iron-sulfur (Fe-S) centers, to quinones in the photosynthetic chain and possibly in a chloroplast respiratory chain. The immediate electron acceptor for the enzyme in this species is believed to be plastoquinone. Couples the redox reaction to proton translocation, and thus conserves the redox energy in a proton gradient. This Spinacia oleracea (Spinach) protein is NAD(P)H-quinone oxidoreductase subunit K, chloroplastic.